Consider the following 502-residue polypeptide: Cytochrome P450 monooxygenase orf6 (502 aa).

The helical transmembrane segment at 3-25 threads the bilayer; sequence ALWVLAVALVAYFLCLSIYRLFL. Asn-382 carries N-linked (GlcNAc...) asparagine glycosylation. Cys-445 serves as a coordination point for heme.

It belongs to the cytochrome P450 family. Requires heme as cofactor.

Its subcellular location is the membrane. It functions in the pathway mycotoxin biosynthesis. Functionally, cytochrome P450 monooxygenase; part of the gene cluster that mediates the biosynthesis of brefeldin A (BFA), a protein transport inhibitor that shows antiviral, antifungal, and antitumor properties. The proposed biosynthesis of BFA involves formation of an acyclic polyketide chain that is differentially tailored throughout the backbone. The highly reducing polyketide synthase Bref-PKS is proposed to synthesize the precisely reduced octaketide precursor, which could then be directly offloaded by the thiohydrolase enzyme Bref-TH followed by a cytochrome P450 monooxygenase-mediated formation of the cyclopentane ring and macrocyclization to afford 7-deoxy BFA. Alternatively, the first ring annulation can also occur on the ACP-tethered intermediate before the thiohydrolase release and lactonization. The C7-hydroxylation by another cytochrome P450 monooxygenase is believed to be the final step in the process to obtain the final structure of BFA. In addition to the HRPKS Bref-PKS and the thiohydrolase Bref-TH, the brefeldin A biosynthesis cluster contains 4 cytochrome p450 monooxygenases (called orf3 to orf6), as well a the probable cluster-specific transcription regulator orf8. This chain is Cytochrome P450 monooxygenase orf6, found in Eupenicillium brefeldianum (Penicillium brefeldianum).